Consider the following 91-residue polypeptide: MAHKKAGGSSRNGRDSESKRLGVKRYGGQFVLAGNIIVRQRGTEYHPGENVGIGKDHTLFALKDGTVKFLVKGAAKRRTVVIEAAQEAAAA.

Residues 1–21 (MAHKKAGGSSRNGRDSESKRL) form a disordered region.

The protein belongs to the bacterial ribosomal protein bL27 family.

In Azoarcus sp. (strain BH72), this protein is Large ribosomal subunit protein bL27.